Here is a 310-residue protein sequence, read N- to C-terminus: ER-derived vesicles protein ERV29 (310 aa).

Over 1-108 the chain is Cytoplasmic; it reads MSYRGPIGNF…YLNKWKHYPY (108 aa). The disordered stretch occupies residues 11–31; sequence GGMPMSSSQGPYSGGAQFRSN. The chain crosses the membrane as a helical span at residues 109–129; it reads FFVVVFLVVVTVSMLIGASLL. Topologically, residues 130-137 are lumenal; the sequence is VLRKQTNY. Residues 138 to 158 traverse the membrane as a helical segment; it reads ATGVLCACVISQALVYGLFTG. The Cytoplasmic portion of the chain corresponds to 159–209; the sequence is SSFVLRNFSVIGGLLIAFSDSIVQNKTTFGMLPELNSKNDKAKGYLLFAGR. The chain crosses the membrane as a helical span at residues 210-230; sequence ILIVLMFIAFTFSKSWFTVVL. Residues 231-245 are Lumenal-facing; sequence TIIGTICFAIGYKTK. Residues 246–266 traverse the membrane as a helical segment; the sequence is FASIMLGLILTFYNITLNNYW. The Cytoplasmic segment spans residues 267 to 310; it reads FYNNTKRDFLKYEFYQNLSIIGGLLLVTNTGAGELSVDEKKKIY. The Di-lysine motif signature appears at 307–310; sequence KKIY.

The protein belongs to the SURF4 family.

It is found in the endoplasmic reticulum membrane. Functionally, constituent of COPII-coated endoplasmic reticulum-derived transport vesicles. Required for efficient transport of a subset of secretory proteins to the Golgi. The C-terminal di-lysine motif is required for exit from the endoplasmic reticulum. Required directly for packaging glycosylated pro-alpha-factor into COPII vesicles. Facilitates retrograde transport from the Golgi to the endoplasmic reticulum. The sequence is that of ER-derived vesicles protein ERV29 (ERV29) from Saccharomyces cerevisiae (strain ATCC 204508 / S288c) (Baker's yeast).